The following is a 492-amino-acid chain: Cytochrome P450 26A1 (492 aa).

Cys437 lines the heme pocket.

It belongs to the cytochrome P450 family. Heme serves as cofactor. As to expression, expressed primarily in ovary, brain and eyes.

The protein localises to the endoplasmic reticulum membrane. Its subcellular location is the microsome membrane. The catalysed reaction is all-trans-retinoate + reduced [NADPH--hemoprotein reductase] + O2 = all-trans-(4S)-hydroxyretinoate + oxidized [NADPH--hemoprotein reductase] + H2O + H(+). A cytochrome P450 monooxygenase involved in the metabolism of all-trans retinoic acid (atRA), a signaling molecule that binds to retinoic acid receptors and regulates gene transcription. May regulate at-RA signaling during hindbrain development. Mechanistically, uses molecular oxygen inserting one oxygen atom into a substrate, and reducing the second into a water molecule, with two electrons provided by NADPH via cytochrome P450 reductase (CPR; NADPH-ferrihemoprotein reductase). Catalyzes the hydroxylation of carbon hydrogen bonds of atRA primarily at C-4. Has no activity toward 9-cis and 13-cis retinoic acid stereoisomers. May play a role in the oxidative metabolism of xenobiotics such as tazarotenic acid. In Xenopus laevis (African clawed frog), this protein is Cytochrome P450 26A1 (cyp26a1).